The sequence spans 182 residues: Meiotic recombination protein REC104 (182 aa).

Interacts with REC114 and SPO11.

Functionally, potential transcriptional regulator that is required to activate expression of a number of early meiotic genes including HOP1. In Saccharomyces cerevisiae (strain ATCC 204508 / S288c) (Baker's yeast), this protein is Meiotic recombination protein REC104 (REC104).